The sequence spans 1133 residues: Exportin-4 (1133 aa).

This sequence belongs to the exportin family. Interacts with Ran and cargo proteins in a GTP-dependent manner.

Its subcellular location is the cytoplasm. The protein resides in the nucleus. Mediates the nuclear export of proteins (cargos). In the nucleus binds cooperatively to its cargo and to the GTPase Ran in its active GTP-bound form. Docking of this trimeric complex to the nuclear pore complex (NPC) is mediated through binding to nucleoporins. Upon transit of a nuclear export complex into the cytoplasm, disassembling of the complex and hydrolysis of Ran-GTP to Ran-GDP cause release of the cargo from the export receptor. Xpo4 then return to the nuclear compartment and mediate another round of transport. The directionality of nuclear export is thought to be conferred by an asymmetric distribution of the GTP- and GDP-bound forms of Ran between the cytoplasm and nucleus. This is Exportin-4 (xpo4) from Dictyostelium discoideum (Social amoeba).